The sequence spans 118 residues: uncharacterized protein (118 aa).

The chain crosses the membrane as a helical span at residues 41–61 (IFLLIIITIIFALTMYTSVQV).

The protein resides in the host membrane. This is an uncharacterized protein from Ostreid herpesvirus 1 (isolate France) (OsHV-1).